We begin with the raw amino-acid sequence, 674 residues long: Pannexin-2 (674 aa).

At 11–53 the chain is on the cytoplasmic side; that stretch reads MATALLAGEKLRELILPGSQDDKAGALAALLLQLKLELPFDRV. The chain crosses the membrane as a helical span at residues 54-74; the sequence is VTIGTVLVPILLVTLVFTKNF. Residues 75–125 lie on the Extracellular side of the membrane; the sequence is AEEPIYCYTPHNFTRDQALYARGYCWTELRDALPGVDASLWPSLFEHKFLP. Asn86 carries an N-linked (GlcNAc...) asparagine glycan. The helical transmembrane segment at 126-146 threads the bilayer; that stretch reads YALLAFAAIMYVPALGWEFLA. The Cytoplasmic portion of the chain corresponds to 147–230; that stretch reads STRLTSELNF…NFLAKLYLAR (84 aa). The chain crosses the membrane as a helical span at residues 231–251; it reads HVLILLLSVVPISYLCTYYAT. Residues 252–295 are Extracellular-facing; the sequence is QKQNEFTCALGASPDGPVGSAGPTVRVSCKLPSVQLQRIIAGVD. The helical transmembrane segment at 296–316 threads the bilayer; it reads IVLLCFMNLIILVNLIHLFIF. Over 317–674 the chain is Cytoplasmic; it reads RKSNFIFDKL…PRTVVSTVEF (358 aa). The span at 394-408 shows a compositional bias: polar residues; it reads TTPTVRDSGIQTVDP. 2 disordered regions span residues 394-426 and 485-510; these read TTPT…VVKR and AHHY…KKHT. A phosphoserine mark is found at Ser590 and Ser601.

It belongs to the pannexin family. Forms PANX1/PANX2-heteromeric intercellular channels on coexpression in paired Xenopus oocytes. Does not form homomeric channels. Post-translationally, S-palmitoylated in neural stem and progenitor cells. Cleaved by CASP3 and CASP7 during apoptosis. Cleavage has no effect on it function. Expressed in the eye, thyroid, prostate, kidney and liver. Abundantly expressed in the CNS, including hippocampus, olfactory bulb, cortex, cerebellum. Not detected in the white matter.

The protein localises to the cell membrane. It is found in the golgi apparatus membrane. Its subcellular location is the endoplasmic reticulum membrane. Functionally, structural component of the gap junctions and the hemichannels. The protein is Pannexin-2 (Panx2) of Rattus norvegicus (Rat).